The chain runs to 633 residues: tRNA uridine 5-carboxymethylaminomethyl modification enzyme MnmG (633 aa).

FAD is bound at residue 18–23 (GAGHAG). The segment at 208-232 (PRVNGNTIDFDKTEEQPGDKTPNHF) is disordered. Over residues 216–229 (DFDKTEEQPGDKTP) the composition is skewed to basic and acidic residues. NAD(+) is bound at residue 279 to 293 (GPRYCPSIEDKIVRF).

The protein belongs to the MnmG family. As to quaternary structure, homodimer. Heterotetramer of two MnmE and two MnmG subunits. FAD is required as a cofactor.

It is found in the cytoplasm. Functionally, NAD-binding protein involved in the addition of a carboxymethylaminomethyl (cmnm) group at the wobble position (U34) of certain tRNAs, forming tRNA-cmnm(5)s(2)U34. This is tRNA uridine 5-carboxymethylaminomethyl modification enzyme MnmG from Lacticaseibacillus paracasei (strain ATCC 334 / BCRC 17002 / CCUG 31169 / CIP 107868 / KCTC 3260 / NRRL B-441) (Lactobacillus paracasei).